An 851-amino-acid polypeptide reads, in one-letter code: Molybdenum cofactor sulfurase (851 aa).

At K249 the chain carries N6-(pyridoxal phosphate)lysine. C413 is a catalytic residue. Residues 665–844 form the MOSC domain; that stretch reads QYLRKFVMPG…LMVGDIVTPS (180 aa).

It belongs to the class-V pyridoxal-phosphate-dependent aminotransferase family. MOCOS subfamily. Pyridoxal 5'-phosphate is required as a cofactor.

It catalyses the reaction Mo-molybdopterin + L-cysteine + AH2 = thio-Mo-molybdopterin + L-alanine + A + H2O. It functions in the pathway cofactor biosynthesis; molybdopterin biosynthesis. Sulfurates the molybdenum cofactor. Sulfation of molybdenum is essential for xanthine dehydrogenase (XDH) and aldehyde oxidase (ADO) enzymes in which molybdenum cofactor is liganded by 1 oxygen and 1 sulfur atom in active form. In Neosartorya fischeri (strain ATCC 1020 / DSM 3700 / CBS 544.65 / FGSC A1164 / JCM 1740 / NRRL 181 / WB 181) (Aspergillus fischerianus), this protein is Molybdenum cofactor sulfurase.